Here is a 375-residue protein sequence, read N- to C-terminus: Chaperone protein DnaJ (375 aa).

In terms of domain architecture, J spans 5–70; sequence DYYEVLGVNR…RKRASYDQFG (66 aa). The segment at 133–211 adopts a CR-type zinc-finger fold; it reads GLSRTIKVPT…CHGQGRQQQT (79 aa). 8 residues coordinate Zn(2+): Cys-146, Cys-149, Cys-163, Cys-166, Cys-185, Cys-188, Cys-199, and Cys-202. CXXCXGXG motif repeat units lie at residues 146–153, 163–170, 185–192, and 199–206; these read CKTCNGSG, CPRCNGSG, CSVCRGRG, and CTDCHGQG.

It belongs to the DnaJ family. Homodimer. It depends on Zn(2+) as a cofactor.

It localises to the cytoplasm. In terms of biological role, participates actively in the response to hyperosmotic and heat shock by preventing the aggregation of stress-denatured proteins and by disaggregating proteins, also in an autonomous, DnaK-independent fashion. Unfolded proteins bind initially to DnaJ; upon interaction with the DnaJ-bound protein, DnaK hydrolyzes its bound ATP, resulting in the formation of a stable complex. GrpE releases ADP from DnaK; ATP binding to DnaK triggers the release of the substrate protein, thus completing the reaction cycle. Several rounds of ATP-dependent interactions between DnaJ, DnaK and GrpE are required for fully efficient folding. Also involved, together with DnaK and GrpE, in the DNA replication of plasmids through activation of initiation proteins. The protein is Chaperone protein DnaJ of Coxiella burnetii (strain CbuK_Q154) (Coxiella burnetii (strain Q154)).